Consider the following 199-residue polypeptide: Octanoyltransferase (199 aa).

The 173-residue stretch at 27–199 (SNSYDELWLL…FVQYFLTQFK (173 aa)) folds into the BPL/LPL catalytic domain. Residues 66 to 73 (RGGQVTYH), 133 to 135 (SIG), and 146 to 148 (GIA) contribute to the substrate site. The active-site Acyl-thioester intermediate is Cys-164.

The protein belongs to the LipB family.

It localises to the cytoplasm. The catalysed reaction is octanoyl-[ACP] + L-lysyl-[protein] = N(6)-octanoyl-L-lysyl-[protein] + holo-[ACP] + H(+). It participates in protein modification; protein lipoylation via endogenous pathway; protein N(6)-(lipoyl)lysine from octanoyl-[acyl-carrier-protein]: step 1/2. Its function is as follows. Catalyzes the transfer of endogenously produced octanoic acid from octanoyl-acyl-carrier-protein onto the lipoyl domains of lipoate-dependent enzymes. Lipoyl-ACP can also act as a substrate although octanoyl-ACP is likely to be the physiological substrate. The sequence is that of Octanoyltransferase from Legionella pneumophila (strain Lens).